The chain runs to 708 residues: Glycine--tRNA ligase beta subunit (708 aa).

It belongs to the class-II aminoacyl-tRNA synthetase family. In terms of assembly, tetramer of two alpha and two beta subunits.

The protein resides in the cytoplasm. It carries out the reaction tRNA(Gly) + glycine + ATP = glycyl-tRNA(Gly) + AMP + diphosphate. This chain is Glycine--tRNA ligase beta subunit, found in Methylobacillus flagellatus (strain ATCC 51484 / DSM 6875 / VKM B-1610 / KT).